Consider the following 305-residue polypeptide: NADH-cytochrome b5 reductase 1 (305 aa).

Residues valine 8 to tyrosine 28 form a helical membrane-spanning segment. Residues aspartate 44–alanine 156 form the FAD-binding FR-type domain. FAD contacts are provided by residues aspartate 136–asparagine 166 and valine 175–leucine 210.

Belongs to the flavoprotein pyridine nucleotide cytochrome reductase family. FAD is required as a cofactor.

It is found in the membrane. It carries out the reaction 2 Fe(III)-[cytochrome b5] + NADH = 2 Fe(II)-[cytochrome b5] + NAD(+) + H(+). In terms of biological role, NADH-cytochrome b5 reductases are involved in desaturation and elongation of fatty acids, cholesterol biosynthesis, drug metabolism, and, in erythrocyte, methemoglobin reduction. The protein is NADH-cytochrome b5 reductase 1 (Cyb5r1) of Rattus norvegicus (Rat).